We begin with the raw amino-acid sequence, 399 residues long: Sperm equatorial segment protein 1 (399 aa).

An N-terminal signal peptide occupies residues 1–18 (MKLVVLVALWLWPSSLLA). Residue Asn128 is glycosylated (N-linked (GlcNAc...) asparagine). The segment covering 136 to 145 (EEPFIEKEPE) has biased composition (basic and acidic residues). A disordered region spans residues 136 to 250 (EEPFIEKEPE…PSAEDLPGRH (115 aa)). Over residues 157-167 (PEPELEPEPEP) the composition is skewed to acidic residues. A compositionally biased stretch (polar residues) spans 182-206 (VTSTTPNKELTGTSRISSMATQPAN). Residues 207–225 (TQATRITVTVKTTSTMDVS) are compositionally biased toward low complexity.

Belongs to the SPESP1 family. Post-translationally, glycosylated. In testis there are two predominant forms of 77- and 67-kDa and a form of 47-kDa, whereas in epididymal sperm from caput, corpus, and cauda there are two forms of 47- and 43-kDa. Testis forms contain complex carbohydrate residues. Epididymal sperm forms are N-glycosylated. Then undergoes significant glycosylation in the testis and that the majority of these glycoconjugates are removed by the time sperm reach the caput epididymis. As to expression, testis specific.

The protein localises to the cytoplasmic vesicle. It is found in the secretory vesicle. It localises to the acrosome. Its function is as follows. Involved in fertilization ability of sperm. This Mus musculus (Mouse) protein is Sperm equatorial segment protein 1.